The primary structure comprises 392 residues: Zinc finger protein ham-2 (392 aa).

2 C2H2-type zinc fingers span residues 16-39 (FPCS…MQAH) and 43-66 (YTCT…YRVH). The segment at 72–95 (FMCRCCNWAFPDKTSLHIHMQSML) adopts a C2H2-type 3; degenerate zinc-finger fold. Disordered stretches follow at residues 106–130 (LAKS…PFSP) and 278–303 (HISH…HSGE). A compositionally biased stretch (polar residues) spans 112–123 (VVDSTSESGSPR). Over residues 289–303 (SDSHISGGSSSHSGE) the composition is skewed to low complexity.

The protein localises to the nucleus. Its function is as follows. Probable transcription factor that acts downstream of egl-15, to promote migration of the HSN motor neurons from the tail to the gonad primordium during HSN cell differentiation. This Caenorhabditis elegans protein is Zinc finger protein ham-2.